A 419-amino-acid polypeptide reads, in one-letter code: MSKLNPYFGEYGGMYVPQILMPALKQLETAFIEAQEDEAFQEEFTDLLKNYAGRPTALTLTRNLSPNPLAKIYLKREDLLHGGAHKTNQVLGQALLAKRMGKKEIIAETGAGQHGVATALACALLGLKCRVYMGAKDVERQSPNVFRMKLMGAEVIPVTSGSATLKDACNEAMRDWSGCYDKAHYLLGTAAGPHPYPTIVREFQRMIGAETKRQILEREGRLPDAVIACVGGGSNAIGMFADFIDEPEVALIGVEPAGKGIDTPMHGAPLHHGKTGIFFGMKAPLMQDSEGQVEESYSVSAGLDFPSVGPQHAHLAAIGRATYESATDDEALETFQLLARCEGIIPALESAHAIAYAVKLAKEATKETLLVVNLSGRGDKDIFTVADILEQQKVEQQKVEQQKADNQNTEKNNQESGNE.

The residue at position 86 (K86) is an N6-(pyridoxal phosphate)lysine. A compositionally biased stretch (basic and acidic residues) spans V394–K403. The tract at residues V394–E419 is disordered. Over residues A404 to E419 the composition is skewed to polar residues.

This sequence belongs to the TrpB family. As to quaternary structure, tetramer of two alpha and two beta chains. Pyridoxal 5'-phosphate serves as cofactor.

The enzyme catalyses (1S,2R)-1-C-(indol-3-yl)glycerol 3-phosphate + L-serine = D-glyceraldehyde 3-phosphate + L-tryptophan + H2O. It participates in amino-acid biosynthesis; L-tryptophan biosynthesis; L-tryptophan from chorismate: step 5/5. In terms of biological role, the beta subunit is responsible for the synthesis of L-tryptophan from indole and L-serine. The sequence is that of Tryptophan synthase beta chain from Shewanella halifaxensis (strain HAW-EB4).